A 235-amino-acid polypeptide reads, in one-letter code: uncharacterized protein (235 aa).

This is an uncharacterized protein from Bacillus subtilis (strain 168).